We begin with the raw amino-acid sequence, 377 residues long: Metallo-hydrolase mfmC (377 aa).

Residues histidine 126, histidine 128, aspartate 130, histidine 131, histidine 209, and aspartate 233 each coordinate Zn(2+).

Belongs to the metallo-beta-lactamase superfamily.

It participates in secondary metabolite biosynthesis; terpenoid biosynthesis. In terms of biological role, metallo-hydrolase; part of the gene cluster that mediates the biosynthesis of the phthalide-terpenoid hybrid 11'-O-desmethylfendlerol. Within the pathway, mfma and mfmC act together to convert 3,5-dimethylorsellinic acid (DMOA) into the phthalide 5,7-dihydroxy-4-(hydroxymethyl)-6-methylphthalide. The biosynthesis of 11'-O-desmethylfendlerol begins with the NR-PKS mfmB that forms 3,5-dimethylorsellinic acid (DMOA), which is then transformed into the phthalide 5,7-dihydroxy-4-(hydroxymethyl)-6-methylphthalide by the cytochrome P450 monooxygenase mfmA and the hydrolase mfmC. Subsequently, the methyltransferase mfmE catalyzes 7-O-methylation to yield 5-hydroxy-4-(hydroxymethyl)-7-methoxy-6-methylphthalide, which undergoes C-3 hydroxylation by the cytochrome P450 monooxygenase mfmF. The resultant cyclopolic acid (2,5-dihydroxy-4-(hydroxymethyl)-7-methoxy-6-methylphthalide) is then farnesylated by the DMATS-type prenyltransferase mfmD to afford 5-O-farnesylcyclopolic acid. Finally, the Pyr4-family terpene cyclase mfmH cyclizes the farnesyl moiety of 5-O-farnesylcyclopolic acid into a drimane-like structure, thus completing the biosynthesis of 11'-O-desmethylfendlerol. The polypeptide is Metallo-hydrolase mfmC (Annulohypoxylon moriforme (Filamentous fungus)).